The following is a 121-amino-acid chain: uncharacterized protein (121 aa).

This is an uncharacterized protein from Ictaluridae (bullhead catfishes).